The primary structure comprises 223 residues: 2-C-methyl-D-erythritol 4-phosphate cytidylyltransferase (223 aa).

The protein belongs to the IspD/TarI cytidylyltransferase family. IspD subfamily.

It carries out the reaction 2-C-methyl-D-erythritol 4-phosphate + CTP + H(+) = 4-CDP-2-C-methyl-D-erythritol + diphosphate. Its pathway is isoprenoid biosynthesis; isopentenyl diphosphate biosynthesis via DXP pathway; isopentenyl diphosphate from 1-deoxy-D-xylulose 5-phosphate: step 2/6. Functionally, catalyzes the formation of 4-diphosphocytidyl-2-C-methyl-D-erythritol from CTP and 2-C-methyl-D-erythritol 4-phosphate (MEP). The sequence is that of 2-C-methyl-D-erythritol 4-phosphate cytidylyltransferase from Prochlorococcus marinus (strain MIT 9215).